An 884-amino-acid polypeptide reads, in one-letter code: Translation initiation factor IF-2 (884 aa).

The segment at 93–288 (VNTPEAEQAK…KGKRKPSTLQ (196 aa)) is disordered. Residues 99-209 (EQAKAEEQAQ…KMAAENEGKW (111 aa)) show a composition bias toward basic and acidic residues. Polar residues predominate over residues 216–229 (QTESADYHVTTSQH). Residues 231–246 (RAAEDENDAKVEGDRR) show a composition bias toward basic and acidic residues. The segment covering 247–261 (SRTRGGKATKQKKGN) has biased composition (basic residues). Positions 262–275 (KLSESKADREEARA) are enriched in basic and acidic residues. In terms of domain architecture, tr-type G spans 383–552 (HRAPVVTIMG…LLQAEVLELK (170 aa)). Residues 392–399 (GHVDHGKT) form a G1 region. Position 392–399 (392–399 (GHVDHGKT)) interacts with GTP. Residues 417-421 (GITQH) form a G2 region. Residues 438–441 (DTPG) are G3. Residues 438-442 (DTPGH) and 492-495 (NKID) each bind GTP. The tract at residues 492-495 (NKID) is G4. A G5 region spans residues 528-530 (SAK).

Belongs to the TRAFAC class translation factor GTPase superfamily. Classic translation factor GTPase family. IF-2 subfamily.

The protein resides in the cytoplasm. Its function is as follows. One of the essential components for the initiation of protein synthesis. Protects formylmethionyl-tRNA from spontaneous hydrolysis and promotes its binding to the 30S ribosomal subunits. Also involved in the hydrolysis of GTP during the formation of the 70S ribosomal complex. The polypeptide is Translation initiation factor IF-2 (Yersinia pestis bv. Antiqua (strain Antiqua)).